The sequence spans 401 residues: Succinyl-diaminopimelate desuccinylase (401 aa).

Histidine 71 contacts Zn(2+). Aspartate 73 is a catalytic residue. Residue aspartate 104 participates in Zn(2+) binding. Glutamate 138 (proton acceptor) is an active-site residue. Glutamate 139, glutamate 167, and histidine 352 together coordinate Zn(2+).

It belongs to the peptidase M20A family. DapE subfamily. Homodimer. Requires Zn(2+) as cofactor. It depends on Co(2+) as a cofactor.

The enzyme catalyses N-succinyl-(2S,6S)-2,6-diaminopimelate + H2O = (2S,6S)-2,6-diaminopimelate + succinate. It functions in the pathway amino-acid biosynthesis; L-lysine biosynthesis via DAP pathway; LL-2,6-diaminopimelate from (S)-tetrahydrodipicolinate (succinylase route): step 3/3. Catalyzes the hydrolysis of N-succinyl-L,L-diaminopimelic acid (SDAP), forming succinate and LL-2,6-diaminopimelate (DAP), an intermediate involved in the bacterial biosynthesis of lysine and meso-diaminopimelic acid, an essential component of bacterial cell walls. The protein is Succinyl-diaminopimelate desuccinylase of Wolbachia sp. subsp. Brugia malayi (strain TRS).